Consider the following 390-residue polypeptide: MTDVAPPAGVLDVPTDSVGVVTPQRMHFSEPLQLRNGSQIADYDLMVETYGTLNAARTNAVLVCHALNASHHVAGIAADNPRDIGWWDNMVGPGKPLDTNRFFVIGVNNLGSCFGSTGPMSTNPSTGAPYGALFPVVTVEDWVNAQARVADIFGIQQFAAVMGGSLGGMQALAWSLMYPERLRHCIVVASTPKLSAQNIAFNEVARSSILSDPDFHGGNYYAHNVKPKRGLRVARMIGHITYLSDEDMAEKFGRSLKAEDIRFSFDVEFQVESYLRYQGDKFAEYFDANTYLLITRALDYFDPALAHGGDLTRAMAQTQAGFLVVSFTTDWRFAPNRSREIVKALLDNKRPVSYAEIDAPHGHDAFLLDDARYHNLMRAYYDRIAEEIGA.

Residues 59–369 form the AB hydrolase-1 domain; sequence NAVLVCHALN…PHGHDAFLLD (311 aa). The Nucleophile role is filled by serine 165. Arginine 235 lines the substrate pocket. Residues aspartate 330 and histidine 363 contribute to the active site. Substrate is bound at residue aspartate 364.

The protein belongs to the AB hydrolase superfamily. MetX family. As to quaternary structure, homodimer.

Its subcellular location is the cytoplasm. It catalyses the reaction L-homoserine + succinyl-CoA = O-succinyl-L-homoserine + CoA. It functions in the pathway amino-acid biosynthesis; L-methionine biosynthesis via de novo pathway; O-succinyl-L-homoserine from L-homoserine: step 1/1. Functionally, transfers a succinyl group from succinyl-CoA to L-homoserine, forming succinyl-L-homoserine. In Cupriavidus metallidurans (strain ATCC 43123 / DSM 2839 / NBRC 102507 / CH34) (Ralstonia metallidurans), this protein is Homoserine O-succinyltransferase.